The primary structure comprises 83 residues: Cytochrome c oxidase subunit 7A2, mitochondrial (83 aa).

A mitochondrion-targeting transit peptide spans 1 to 23 (MLRNLLALRQIAKRTISTSSRRQ). The Mitochondrial matrix portion of the chain corresponds to 24-48 (FENKVPEKQKLFQEDNGIPVHLKGG). Lys-33 carries the N6-acetyllysine modification. The chain crosses the membrane as a helical span at residues 49 to 77 (IADALLYRATLILTVGGTAYAMYELAVAS). At 78–83 (FPKKQD) the chain is on the mitochondrial intermembrane side.

The protein belongs to the cytochrome c oxidase VIIa family. Component of the cytochrome c oxidase (complex IV, CIV), a multisubunit enzyme composed of 14 subunits. The complex is composed of a catalytic core of 3 subunits MT-CO1, MT-CO2 and MT-CO3, encoded in the mitochondrial DNA, and 11 supernumerary subunits COX4I1 (or COX4I2), COX5A, COX5B, COX6A2 (or COX6A1), COX6B1 (or COX6B2), COX6C, COX7A1 (or COX7A2), COX7B, COX7C, COX8B and NDUFA4, which are encoded in the nuclear genome. The complex exists as a monomer or a dimer and forms supercomplexes (SCs) in the inner mitochondrial membrane with NADH-ubiquinone oxidoreductase (complex I, CI) and ubiquinol-cytochrome c oxidoreductase (cytochrome b-c1 complex, complex III, CIII), resulting in different assemblies (supercomplex SCI(1)III(2)IV(1) and megacomplex MCI(2)III(2)IV(2)). Interacts with PET100.

Its subcellular location is the mitochondrion inner membrane. Its pathway is energy metabolism; oxidative phosphorylation. Functionally, component of the cytochrome c oxidase, the last enzyme in the mitochondrial electron transport chain which drives oxidative phosphorylation. The respiratory chain contains 3 multisubunit complexes succinate dehydrogenase (complex II, CII), ubiquinol-cytochrome c oxidoreductase (cytochrome b-c1 complex, complex III, CIII) and cytochrome c oxidase (complex IV, CIV), that cooperate to transfer electrons derived from NADH and succinate to molecular oxygen, creating an electrochemical gradient over the inner membrane that drives transmembrane transport and the ATP synthase. Cytochrome c oxidase is the component of the respiratory chain that catalyzes the reduction of oxygen to water. Electrons originating from reduced cytochrome c in the intermembrane space (IMS) are transferred via the dinuclear copper A center (CU(A)) of subunit 2 and heme A of subunit 1 to the active site in subunit 1, a binuclear center (BNC) formed by heme A3 and copper B (CU(B)). The BNC reduces molecular oxygen to 2 water molecules using 4 electrons from cytochrome c in the IMS and 4 protons from the mitochondrial matrix. The protein is Cytochrome c oxidase subunit 7A2, mitochondrial (COX7A2) of Bos taurus (Bovine).